The following is a 421-amino-acid chain: Glutamyl-tRNA reductase (421 aa).

Residues 49–52 (TCNR), Ser109, 114–116 (EPQ), and Gln120 each bind substrate. Cys50 serves as the catalytic Nucleophile. Residue 189 to 194 (GAGKMS) participates in NADP(+) binding.

It belongs to the glutamyl-tRNA reductase family. In terms of assembly, homodimer.

It carries out the reaction (S)-4-amino-5-oxopentanoate + tRNA(Glu) + NADP(+) = L-glutamyl-tRNA(Glu) + NADPH + H(+). It functions in the pathway porphyrin-containing compound metabolism; protoporphyrin-IX biosynthesis; 5-aminolevulinate from L-glutamyl-tRNA(Glu): step 1/2. In terms of biological role, catalyzes the NADPH-dependent reduction of glutamyl-tRNA(Glu) to glutamate 1-semialdehyde (GSA). The polypeptide is Glutamyl-tRNA reductase (Solibacter usitatus (strain Ellin6076)).